A 107-amino-acid chain; its full sequence is Protein Rev (107 aa).

Position 5 is a phosphoserine; by host CK2 (serine 5). The segment at 18-26 (AIKILYQSN) is homomultimerization. Disordered stretches follow at residues 24-48 (QSNP…WRAR) and 82-107 (HLDC…VGRS). The short motif at 34-50 (TRQARRNRRRRWRARQR) is the Nuclear localization signal and RNA-binding (RRE) element. Basic residues predominate over residues 36–48 (QARRNRRRRWRAR). The short motif at 73–84 (LQLPPLERLHLD) is the Nuclear export signal and binding to XPO1 element. Residues 88–101 (DSGTSGTQQPQGTE) show a composition bias toward polar residues. Serine 92 bears the Phosphoserine; by host mark.

Belongs to the HIV-1 REV protein family. In terms of assembly, homomultimer; when bound to the RRE. Multimeric assembly is essential for activity and may involve XPO1. Binds to human KPNB1, XPO1, TNPO1, RANBP5 and IPO7. Interacts with the viral Integrase. Interacts with human KHDRBS1. Interacts with human NAP1; this interaction decreases Rev multimerization and stimulates its activity. Interacts with human DEAD-box helicases DDX3 and DDX24; these interactions may serve for viral RNA export to the cytoplasm and packaging, respectively. Interacts with human PSIP1; this interaction may inhibit HIV-1 DNA integration by promoting dissociation of the Integrase-LEDGF/p75 complex. Post-translationally, asymmetrically arginine dimethylated at one site by host PRMT6. Methylation impairs the RNA-binding activity and export of viral RNA from the nucleus to the cytoplasm. In terms of processing, phosphorylated by protein kinase CK2. Presence of, and maybe binding to the N-terminus of the regulatory beta subunit of CK2 is necessary for CK2-mediated Rev's phosphorylation.

It is found in the host nucleus. The protein localises to the host nucleolus. Its subcellular location is the host cytoplasm. In terms of biological role, escorts unspliced or incompletely spliced viral pre-mRNAs (late transcripts) out of the nucleus of infected cells. These pre-mRNAs carry a recognition sequence called Rev responsive element (RRE) located in the env gene, that is not present in fully spliced viral mRNAs (early transcripts). This function is essential since most viral proteins are translated from unspliced or partially spliced pre-mRNAs which cannot exit the nucleus by the pathway used by fully processed cellular mRNAs. Rev itself is translated from a fully spliced mRNA that readily exits the nucleus. Rev's nuclear localization signal (NLS) binds directly to KPNB1/Importin beta-1 without previous binding to KPNA1/Importin alpha-1. KPNB1 binds to the GDP bound form of RAN (Ran-GDP) and targets Rev to the nucleus. In the nucleus, the conversion from Ran-GDP to Ran-GTP dissociates Rev from KPNB1 and allows Rev's binding to the RRE in viral pre-mRNAs. Rev multimerization on the RRE via cooperative assembly exposes its nuclear export signal (NES) to the surface. Rev can then form a complex with XPO1/CRM1 and Ran-GTP, leading to nuclear export of the complex. Conversion from Ran-GTP to Ran-GDP mediates dissociation of the Rev/RRE/XPO1/RAN complex, so that Rev can return to the nucleus for a subsequent round of export. Beside KPNB1, also seems to interact with TNPO1/Transportin-1, RANBP5/IPO5 and IPO7/RANBP7 for nuclear import. The nucleoporin-like HRB/RIP is an essential cofactor that probably indirectly interacts with Rev to release HIV RNAs from the perinuclear region to the cytoplasm. The sequence is that of Protein Rev from Human immunodeficiency virus type 1 group M subtype G (isolate SE6165) (HIV-1).